The primary structure comprises 275 residues: Digeranylgeranylglyceryl phosphate synthase (275 aa).

8 helical membrane-spanning segments follow: residues 12–32 (VHNV…ATTW), 35–55 (TPLF…GYVI), 88–108 (IVLF…PFGF), 125–145 (KLGL…AYYG), 146–166 (GLAS…IFFF), 200–220 (WIIA…PYFL), 224–244 (VIYL…LILH), and 255–275 (SLMK…SLRI).

The protein belongs to the UbiA prenyltransferase family. DGGGP synthase subfamily. Mg(2+) is required as a cofactor.

It localises to the cell membrane. The catalysed reaction is sn-3-O-(geranylgeranyl)glycerol 1-phosphate + (2E,6E,10E)-geranylgeranyl diphosphate = 2,3-bis-O-(geranylgeranyl)-sn-glycerol 1-phosphate + diphosphate. Its pathway is membrane lipid metabolism; glycerophospholipid metabolism. In terms of biological role, prenyltransferase that catalyzes the transfer of the geranylgeranyl moiety of geranylgeranyl diphosphate (GGPP) to the C2 hydroxyl of (S)-3-O-geranylgeranylglyceryl phosphate (GGGP). This reaction is the second ether-bond-formation step in the biosynthesis of archaeal membrane lipids. This is Digeranylgeranylglyceryl phosphate synthase from Sulfolobus acidocaldarius (strain ATCC 33909 / DSM 639 / JCM 8929 / NBRC 15157 / NCIMB 11770).